A 91-amino-acid polypeptide reads, in one-letter code: Putative regulatory protein Cphy_2880 (91 aa).

Belongs to the RemA family.

The polypeptide is Putative regulatory protein Cphy_2880 (Lachnoclostridium phytofermentans (strain ATCC 700394 / DSM 18823 / ISDg) (Clostridium phytofermentans)).